Reading from the N-terminus, the 1526-residue chain is Probable autotransporter YpjA (1526 aa).

The N-terminal stretch at 1–29 (MNRTSPYYCRRSVLSLLISALIYAPPGMA) is a signal peptide. The segment at 1173 to 1223 (NSNWNLTNDVKPNPDPIPNPKPDPKPDPKPDPNPKPDPTPDPTPTPVPEKR) is disordered. Positions 1194 to 1206 (PDPKPDPKPDPNP) are enriched in basic and acidic residues. The segment covering 1207 to 1219 (KPDPTPDPTPTPV) has biased composition (pro residues). Residues 1258-1526 (ASPHNNNVWG…NAVAGVNWSF (269 aa)) enclose the Autotransporter domain.

The protein resides in the cell outer membrane. In terms of biological role, upon overexpression shows increased adherence to polyvinyl chloride (PVC) plates, increased mature biofilm formation. In Escherichia coli (strain K12), this protein is Probable autotransporter YpjA (ypjA).